The following is a 324-amino-acid chain: Pseudouridine-5'-phosphate glycosidase (324 aa).

The Proton donor role is filled by glutamate 43. Positions 104 and 124 each coordinate substrate. Mn(2+) is bound at residue aspartate 156. Residue 158–160 coordinates substrate; it reads SAD. Lysine 177 acts as the Nucleophile in catalysis.

It belongs to the pseudouridine-5'-phosphate glycosidase family. As to quaternary structure, homotrimer. Requires Mn(2+) as cofactor.

It carries out the reaction D-ribose 5-phosphate + uracil = psi-UMP + H2O. Catalyzes the reversible cleavage of pseudouridine 5'-phosphate (PsiMP) to ribose 5-phosphate and uracil. Functions biologically in the cleavage direction, as part of a pseudouridine degradation pathway. This Salinispora tropica (strain ATCC BAA-916 / DSM 44818 / JCM 13857 / NBRC 105044 / CNB-440) protein is Pseudouridine-5'-phosphate glycosidase.